Reading from the N-terminus, the 256-residue chain is DNA repair protein RecO (256 aa).

Belongs to the RecO family.

In terms of biological role, involved in DNA repair and RecF pathway recombination. This chain is DNA repair protein RecO, found in Rhizobium leguminosarum bv. trifolii (strain WSM2304).